The following is a 363-amino-acid chain: NADH-quinone oxidoreductase subunit H (363 aa).

10 consecutive transmembrane segments (helical) span residues Val-29–Trp-49, Gly-62–Phe-82, Val-94–Val-114, Val-127–Gly-147, Val-166–Ser-186, Phe-202–Val-222, Ile-239–Leu-257, Ile-264–Val-286, Leu-293–Ala-313, and Phe-339–Ile-359.

It belongs to the complex I subunit 1 family. NDH-1 is composed of 14 different subunits. Subunits NuoA, H, J, K, L, M, N constitute the membrane sector of the complex.

It localises to the cell inner membrane. It catalyses the reaction a quinone + NADH + 5 H(+)(in) = a quinol + NAD(+) + 4 H(+)(out). In terms of biological role, NDH-1 shuttles electrons from NADH, via FMN and iron-sulfur (Fe-S) centers, to quinones in the respiratory chain. The immediate electron acceptor for the enzyme in this species is believed to be ubiquinone. Couples the redox reaction to proton translocation (for every two electrons transferred, four hydrogen ions are translocated across the cytoplasmic membrane), and thus conserves the redox energy in a proton gradient. This subunit may bind ubiquinone. This Xylella fastidiosa (strain M12) protein is NADH-quinone oxidoreductase subunit H.